A 1022-amino-acid polypeptide reads, in one-letter code: ATPase MORC2B (1022 aa).

The residue at position 2 (Ala2) is an N-acetylalanine. ATP-binding positions include Asn39, 87–89 (SAK), and 99–105 (RYGNGLK). Asn39 serves as a coordination point for Mg(2+). Positions 285-362 (KTRAEQEVKK…RDAKQQALKE (78 aa)) form a coiled coil. Lys427 contributes to the ATP binding site. The segment at 490-544 (AMQVPTTIQCDLCLKWRTLPFQLSAVEEGYPINWVCSMNPDPEQDQCEAFELKQK) adopts a CW-type zinc-finger fold. 4 residues coordinate Zn(2+): Cys499, Cys502, Cys525, and Cys536. Residues 555-583 (KTQEERQKQLTEKIQQEQRKLKALKKIKP) adopt a coiled-coil conformation. Ser615 is subject to Phosphoserine. Residue Lys649 forms a Glycyl lysine isopeptide (Lys-Gly) (interchain with G-Cter in SUMO2) linkage. 4 positions are modified to phosphoserine: Ser690, Ser724, Ser733, and Ser737. Lys758 is covalently cross-linked (Glycyl lysine isopeptide (Lys-Gly) (interchain with G-Cter in SUMO2)). 2 positions are modified to phosphoserine: Ser768 and Ser770. Thr827 carries the post-translational modification Phosphothreonine. A phosphoserine mark is found at Ser846 and Ser851. Lys922 participates in a covalent cross-link: Glycyl lysine isopeptide (Lys-Gly) (interchain with G-Cter in SUMO2). Positions 962-1001 (QAKVSEESLRISQKKLQETEEKLQKLRTNIQTLLQMAQQG) form a coiled coil.

In terms of assembly, interacts with Morc2a. As to expression, protein is abundant in testes but not detected in other adult tissues examined (at protein level). Detected in germ cells with a distinct developmental-specific expression pattern but not in somatic cells such as Sertoli cells.

The protein resides in the nucleus. It carries out the reaction ATP + H2O = ADP + phosphate + H(+). Functionally, required for chromosomal synapsis and meiotic recombination in males and females. The polypeptide is ATPase MORC2B (Mus musculus (Mouse)).